The chain runs to 282 residues: Bicarbonate transport ATP-binding protein CmpD (282 aa).

The ABC transporter domain occupies 24-257; that stretch reads LTIENVSKVY…RPRDRDRIME (234 aa). 60–67 contributes to the ATP binding site; it reads GHSGCGKS.

Belongs to the ABC transporter superfamily. Nitrate/nitrite/cyanate uptake transporter (NitT) (TC 3.A.1.16) family. As to quaternary structure, the complex is composed of two ATP-binding proteins (CmpC and CmpD), a transmembrane protein (CmpB) and a solute-binding protein (CmpA).

Its subcellular location is the cell inner membrane. Part of the ABC transporter complex CmpABCD involved in bicarbonate transport. Responsible for energy coupling to the transport system. In Synechocystis sp. (strain ATCC 27184 / PCC 6803 / Kazusa), this protein is Bicarbonate transport ATP-binding protein CmpD (cmpD).